We begin with the raw amino-acid sequence, 207 residues long: Large ribosomal subunit protein bL25 (207 aa).

The segment at 186–207 is disordered; sequence SKPRGGAGAEGEADAEGEAAAE. A compositionally biased stretch (acidic residues) spans 196–207; the sequence is GEADAEGEAAAE.

It belongs to the bacterial ribosomal protein bL25 family. CTC subfamily. Part of the 50S ribosomal subunit; part of the 5S rRNA/L5/L18/L25 subcomplex. Contacts the 5S rRNA. Binds to the 5S rRNA independently of L5 and L18.

In terms of biological role, this is one of the proteins that binds to the 5S RNA in the ribosome where it forms part of the central protuberance. The polypeptide is Large ribosomal subunit protein bL25 (Methylobacillus flagellatus (strain ATCC 51484 / DSM 6875 / VKM B-1610 / KT)).